The chain runs to 380 residues: Chaperone protein DnaJ (380 aa).

Positions 5 to 70 (DYYEVLGVER…SKRAAYDQYG (66 aa)) constitute a J domain. The CR-type zinc-finger motif lies at 139-217 (GTTVNIRVPT…CHGEGRVEES (79 aa)). Zn(2+)-binding residues include cysteine 152, cysteine 155, cysteine 169, cysteine 172, cysteine 191, cysteine 194, cysteine 205, and cysteine 208. 4 CXXCXGXG motif repeats span residues 152 to 159 (CKPCDGSG), 169 to 176 (CPTCGGIG), 191 to 198 (CPRCHGHG), and 205 to 212 (CDSCHGEG).

The protein belongs to the DnaJ family. Homodimer. Requires Zn(2+) as cofactor.

It is found in the cytoplasm. Participates actively in the response to hyperosmotic and heat shock by preventing the aggregation of stress-denatured proteins and by disaggregating proteins, also in an autonomous, DnaK-independent fashion. Unfolded proteins bind initially to DnaJ; upon interaction with the DnaJ-bound protein, DnaK hydrolyzes its bound ATP, resulting in the formation of a stable complex. GrpE releases ADP from DnaK; ATP binding to DnaK triggers the release of the substrate protein, thus completing the reaction cycle. Several rounds of ATP-dependent interactions between DnaJ, DnaK and GrpE are required for fully efficient folding. Also involved, together with DnaK and GrpE, in the DNA replication of plasmids through activation of initiation proteins. This is Chaperone protein DnaJ from Pseudomonas syringae pv. tomato (strain ATCC BAA-871 / DC3000).